A 273-amino-acid polypeptide reads, in one-letter code: DnaJ homolog subfamily C member 27 (273 aa).

GTP is bound by residues 23–30, 71–75, and 134–137; these read GNAEVGKS, DMAGH, and NKID. The region spanning 217-273 is the J domain; that stretch reads DSWDMLGVKPGATRDEVNKAYRKLAVLLHPDKCVAPGSEDAFKAVVNARTALLKNIK.

Belongs to the small GTPase superfamily. Rab family.

The protein localises to the nucleus. Its function is as follows. GTPase possibly involved in regulation of the MEK/ERK pathway. This is DnaJ homolog subfamily C member 27 (DNAJC27) from Gallus gallus (Chicken).